The primary structure comprises 910 residues: Staphylococcal nuclease domain-containing protein 1 (910 aa).

A2 is subject to N-acetylalanine. TNase-like domains are found at residues 18-166 (TVQR…MWSE), 193-328 (KPVN…IWRD), and 341-496 (KQFV…LHSK). T103 is modified (phosphothreonine). Residue K193 is modified to N6-acetyllysine. Position 240 is a phosphothreonine (T240). 2 short sequence motifs (nuclear localization signal) span residues 321 to 325 (RRLRI) and 388 to 392 (KKLRP). The residue at position 426 (S426) is a Phosphoserine. Residue K513 forms a Glycyl lysine isopeptide (Lys-Gly) (interchain with G-Cter in SUMO2) linkage. The 136-residue stretch at 525-660 (GRSEAVVEYV…KQKKEKVWAH (136 aa)) folds into the TNase-like 4 domain. K641 is subject to N6-acetyllysine. Residue S645 is modified to Phosphoserine. One can recognise a Tudor domain in the interval 729-787 (APRRGEFCIAKFVDGEWYRARVEKVESPAKVHVFYIDYGNREILPSTRLGTLPPAFSTR). T779 carries the post-translational modification Phosphothreonine. Residues S785 and S909 each carry the phosphoserine modification.

As to quaternary structure, forms a ternary complex with STAT6 and POLR2A. Associates with the RNA-induced silencing complex (RISC). Interacts with the RISC components AGO2, FMR1 and TNRC6A. Interacts with GTF2E1 and GTF2E2. Interacts with PIM1. Interacts with STAT5. Interacts with SYT11 (via C2 2 domain); the interaction with SYT11 is direct. Post-translationally, phosphorylated by PIM1 in vitro. In lactating cows highly expressed in mammary epithelial cells.

Its subcellular location is the cytoplasm. It is found in the nucleus. The protein localises to the melanosome. The enzyme catalyses Endonucleolytic cleavage to nucleoside 3'-phosphates and 3'-phosphooligonucleotide end-products.. In terms of biological role, endonuclease that mediates miRNA decay of both protein-free and AGO2-loaded miRNAs. As part of its function in miRNA decay, regulates mRNAs involved in G1-to-S phase transition. Functions as a bridging factor between STAT6 and the basal transcription factor. Plays a role in PIM1 regulation of MYB activity. Functions as a transcriptional coactivator for STAT5. The sequence is that of Staphylococcal nuclease domain-containing protein 1 (SND1) from Bos taurus (Bovine).